The chain runs to 84 residues: Small ribosomal subunit protein uS17 (84 aa).

The protein belongs to the universal ribosomal protein uS17 family. Part of the 30S ribosomal subunit.

One of the primary rRNA binding proteins, it binds specifically to the 5'-end of 16S ribosomal RNA. The protein is Small ribosomal subunit protein uS17 of Citrobacter koseri (strain ATCC BAA-895 / CDC 4225-83 / SGSC4696).